We begin with the raw amino-acid sequence, 299 residues long: Coenzyme PQQ synthesis protein B (299 aa).

Belongs to the PqqB family.

It functions in the pathway cofactor biosynthesis; pyrroloquinoline quinone biosynthesis. Its function is as follows. May be involved in the transport of PQQ or its precursor to the periplasm. In Methylobacterium nodulans (strain LMG 21967 / CNCM I-2342 / ORS 2060), this protein is Coenzyme PQQ synthesis protein B.